Here is an 81-residue protein sequence, read N- to C-terminus: Putative defensin-like protein 52 (81 aa).

The N-terminal stretch at 1–20 (MTFFLVIILAISSSNYNVLA) is a signal peptide. 2 disulfides stabilise this stretch: Cys31–Cys55 and Cys41–Cys64.

This sequence belongs to the DEFL family.

It localises to the secreted. In Arabidopsis thaliana (Mouse-ear cress), this protein is Putative defensin-like protein 52.